Consider the following 1123-residue polypeptide: Ubiquitin carboxyl-terminal hydrolase 36 (1123 aa).

Composition is skewed to basic and acidic residues over residues 1–19 (MPIV…KDSA) and 69–90 (GASR…EHTY). Disordered regions lie at residues 1–22 (MPIV…ADDG) and 67–95 (TEGA…SCGD). The region spanning 122 to 423 (AGLHNLGNTC…QAYVLFYLRI (302 aa)) is the USP domain. Cys-131 functions as the Nucleophile in the catalytic mechanism. Catalysis depends on His-382, which acts as the Proton acceptor. 2 positions are modified to phosphoserine: Ser-429 and Ser-464. Positions 430-577 (PEGLISRTGS…RQGSWDSRDV (148 aa)) are disordered. Polar residues predominate over residues 491-503 (RNGSTLGLKSQNG). Residues 510-519 (PSGSPSPKLS) show a composition bias toward low complexity. Ser-546 is modified (phosphoserine). The segment covering 557–571 (SNSNSSRSGSQRQGS) has biased composition (low complexity). Phosphoserine is present on Ser-582. Positions 589–999 (ATANGHGLKG…ESSSCAPSAN (411 aa)) are disordered. Residues 597–609 (KGNDESAGLDRRG) are compositionally biased toward basic and acidic residues. Low complexity predominate over residues 610–623 (SSSSSPEHSASSDS). Residues 640 to 654 (SQETNCSTAGHSKTP) are compositionally biased toward polar residues. Position 667 is a phosphoserine (Ser-667). Over residues 669–681 (VLSNTTTEPASTM) the composition is skewed to polar residues. Ser-682 is subject to Phosphoserine. Low complexity predominate over residues 687 to 697 (KKLALSAKKAS). A phosphoserine mark is found at Ser-713 and Ser-742. Positions 773-785 (EPRSCSSISTALP) are enriched in polar residues. The span at 841-850 (HGKRKRKKKK) shows a compositional bias: basic residues. Polar residues predominate over residues 891–902 (GTQPQVNGQQVG). The residue at position 952 (Ser-952) is a Phosphoserine. Residues 963 to 975 (QETQRAVEEDGHL) are compositionally biased toward basic and acidic residues.

Belongs to the peptidase C19 family. Interacts with isoform 3 of FBXW7; the interaction inhibits MYC degradation induced by SCF(FBW7) complex. Interacts with NTRK1; USP36 does not deubiquitinate NTRK1. Interacts with NEDD4L (via domains WW1, 3 and 4); the interaction inhibits ubiquitination of, at least, NTRK1, KCNQ2 and KCNQ3 by NEDD4L. Interacts (via C-terminus) with EXOSC10 (via C-terminus); the interaction is facilitated by the association with RNA and promotes sumoylation of EXOSC10. In terms of processing, polyubiquitinated by NEDD4L, no effect on USP36 protein levels. Both proteins interact with and regulate each other's ubiquitination levels. Broadly expressed.

It is found in the nucleus. The protein resides in the nucleolus. It localises to the cytoplasm. The catalysed reaction is Thiol-dependent hydrolysis of ester, thioester, amide, peptide and isopeptide bonds formed by the C-terminal Gly of ubiquitin (a 76-residue protein attached to proteins as an intracellular targeting signal).. Deubiquitinase essential for the regulation of nucleolar structure and function. Required for cell and organism viability. Plays an important role in ribosomal RNA processing and protein synthesis, which is mediated, at least in part, through deubiquitination of DHX33, NPM1 and FBL, regulating their protein stability. Functions as a transcriptional repressor by deubiquiting histone H2B at the promoters of genes critical for cellular differentiation, such as CDKN1A, thereby preventing histone H3 'Lys-4' trimethylation (H3K4). Specifically deubiquitinates MYC in the nucleolus, leading to prevent MYC degradation by the proteasome: acts by specifically interacting with isoform 3 of FBXW7 (FBW7gamma) in the nucleolus and counteracting ubiquitination of MYC by the SCF(FBW7) complex. In contrast, it does not interact with isoform 1 of FBXW7 (FBW7alpha) in the nucleoplasm. Interacts to and regulates the actions of E3 ubiquitin-protein ligase NEDD4L over substrates such as NTRK1, KCNQ2 and KCNQ3, affecting their expression an functions. Deubiquitinates SOD2, regulates SOD2 protein stability. Deubiquitinase activity is required to control selective autophagy activation by ubiquitinated proteins. Promotes CEP63 stabilization through 'Lys-48'-linked deubiquitination leading to increased stability. Acts as a SUMO ligase to promote EXOSC10 sumoylation critical for the nucleolar RNA exosome function in rRNA processing. Binds to pre-rRNAs. The polypeptide is Ubiquitin carboxyl-terminal hydrolase 36 (Homo sapiens (Human)).